The primary structure comprises 177 residues: Thymidine kinase (177 aa).

11-18 (GPMFSGKS) is a binding site for ATP. E83 acts as the Proton acceptor in catalysis. Position 113 (F113) interacts with substrate. Residues C138 and C141 each contribute to the Zn(2+) site. 157–161 (IEIIG) contributes to the substrate binding site. Zn(2+) contacts are provided by C170 and C173.

This sequence belongs to the thymidine kinase family. In terms of assembly, homotetramer. Two molecules of substrate bind to each enzyme tetramer.

It carries out the reaction thymidine + ATP = dTMP + ADP + H(+). In terms of biological role, phosphorylates thymidine and thymidine analogs, such as azidothymidine (AZT). Part of the salvage pathway for pyrimidine deoxyribonucleotide synthesis. The chain is Thymidine kinase (OPG101) from Variola virus.